The sequence spans 295 residues: WHI2-like protein P4H10.16c (295 aa).

Belongs to the WHI2 family.

Its subcellular location is the cytoplasm. It is found in the nucleus. This is WHI2-like protein P4H10.16c from Schizosaccharomyces pombe (strain 972 / ATCC 24843) (Fission yeast).